A 507-amino-acid chain; its full sequence is MTVAEAETYWTALAGLPRPTLKELFSDAGRLDRYAATLDLPGGPIRFDWSKTHLSAEVEAVFAALASAMDFEGRRAALIEGAKINNTEGRAAEHTAQRGIGNEASVEEAEALHARMRMLVDAIHAGALGEVRSLIHIGIGGSALGPALAIDALTRDGAKVAVHVVSNIDGCALEAAMKACDPATTMIAVASKTFTTTETMTNAASALEWLRENGVADPYGQVVALTAAPEKAVEWGVDETRVLPFSETVGGRYSLWSSIGFPVAMALGWEGFAAFLDGAAAIDRHFIDADLAGNVVVRAAFADLYYTQVRGCQTRAVFAYDERLALLPDYLQQLEMESNGKRVLADGSPLTRPSAPVTWGGVGTDAQHAVFQLLHQGTHLIPVDFLAVKTQGHDLDPAHHQILLSNCFAQGAALMAGKASDDGARAYPGDRPSATILCDDLNPATLGALIAFHEHRTFVSAVMLGINPFDQFGVELGKAIAKQIESGGGEGFDPSTEALLAAVGLAG.

Glu337 serves as the catalytic Proton donor. Residues His368 and Lys478 contribute to the active site.

Belongs to the GPI family.

The protein localises to the cytoplasm. The catalysed reaction is alpha-D-glucose 6-phosphate = beta-D-fructose 6-phosphate. Its pathway is carbohydrate biosynthesis; gluconeogenesis. The protein operates within carbohydrate degradation; glycolysis; D-glyceraldehyde 3-phosphate and glycerone phosphate from D-glucose: step 2/4. Functionally, catalyzes the reversible isomerization of glucose-6-phosphate to fructose-6-phosphate. This Novosphingobium aromaticivorans (strain ATCC 700278 / DSM 12444 / CCUG 56034 / CIP 105152 / NBRC 16084 / F199) protein is Glucose-6-phosphate isomerase.